Reading from the N-terminus, the 293-residue chain is Formamidopyrimidine-DNA glycosylase (293 aa).

Pro-2 acts as the Schiff-base intermediate with DNA in catalysis. Glu-3 (proton donor) is an active-site residue. Catalysis depends on Lys-58, which acts as the Proton donor; for beta-elimination activity. DNA contacts are provided by His-104, Arg-127, and Arg-170. The FPG-type zinc-finger motif lies at Ser-257–Thr-293. The active-site Proton donor; for delta-elimination activity is the Arg-283.

The protein belongs to the FPG family. In terms of assembly, monomer. Zn(2+) is required as a cofactor.

It catalyses the reaction Hydrolysis of DNA containing ring-opened 7-methylguanine residues, releasing 2,6-diamino-4-hydroxy-5-(N-methyl)formamidopyrimidine.. The enzyme catalyses 2'-deoxyribonucleotide-(2'-deoxyribose 5'-phosphate)-2'-deoxyribonucleotide-DNA = a 3'-end 2'-deoxyribonucleotide-(2,3-dehydro-2,3-deoxyribose 5'-phosphate)-DNA + a 5'-end 5'-phospho-2'-deoxyribonucleoside-DNA + H(+). Involved in base excision repair of DNA damaged by oxidation or by mutagenic agents. Acts as a DNA glycosylase that recognizes and removes damaged bases. Has a preference for oxidized purines, such as 7,8-dihydro-8-oxoguanine (8-oxoG). Has AP (apurinic/apyrimidinic) lyase activity and introduces nicks in the DNA strand. Cleaves the DNA backbone by beta-delta elimination to generate a single-strand break at the site of the removed base with both 3'- and 5'-phosphates. This chain is Formamidopyrimidine-DNA glycosylase, found in Brucella ovis (strain ATCC 25840 / 63/290 / NCTC 10512).